The chain runs to 222 residues: Lipid transferase CIDEC (222 aa).

Residues 1-19 (MAMYTAVSTSVVTQQQLSE) show a composition bias toward polar residues. Disordered stretches follow at residues 1–33 (MAMY…CRVT) and 203–222 (EQPP…KMLQ). A required for liquid-liquid phase separation (LLPS) region spans residues 1–33 (MAMYTAVSTSVVTQQQLSEPSAEAPRARPCRVT). In terms of domain architecture, CIDE-N spans 26 to 103 (RARPCRVTTA…VLHKGQKWQP (78 aa)).

The protein belongs to the CIDE family. In terms of assembly, homodimer. Homooligomer; undergoes liquid-liquid phase separation (LLPS) via its N-terminus, facilitating lipid droplet fusion, occurs at the lipid droplet contact sites. Interacts with CIDEA. Interacts with PLIN1. Interacts with NFAT5; this interaction is direct and retains NFAT5 in the cytoplasm. Interacts with CEBPB. Interacts with isoform CLSTN3beta of CLSTN3; inhibiting the lipid transferase activity of CIDEC. Ubiquitinated and targeted to proteasomal degradation, resulting in a short half-life (about 15 minutes in 3T3-L1 cells). Protein stability depends on triaclyglycerol synthesis, fatty acid availability and lipid droplet formation.

Its subcellular location is the lipid droplet. It is found in the endoplasmic reticulum. The protein resides in the nucleus. It catalyses the reaction a triacyl-sn-glycerol(in) = a triacyl-sn-glycerol(out). Lipid transferase specifically expressed in white adipose tissue, which promotes unilocular lipid droplet formation by mediating lipid droplet fusion. Lipid droplet fusion promotes their enlargement, restricting lipolysis and favoring lipid storage. Localizes on the lipid droplet surface, at focal contact sites between lipid droplets, and mediates atypical lipid droplet fusion by undergoing liquid-liquid phase separation (LLPS) and promoting directional net neutral lipid transfer from the smaller to larger lipid droplets. The transfer direction may be driven by the internal pressure difference between the contacting lipid droplet pair. Its role in neutral lipid transfer and lipid droplet enlargement is activated by the interaction with PLIN1. May also act as a CEBPB coactivator in the white adipose tissue to control the expression of a subset of CEBPB downstream target genes, including SOCS1, SOCS3, TGFB1, TGFBR1, ID2 and XDH. When overexpressed in preadipocytes, induces apoptosis or increases cell susceptibility to apoptosis induced by serum deprivation or TGFB treatment. The polypeptide is Lipid transferase CIDEC (Bos taurus (Bovine)).